Here is a 386-residue protein sequence, read N- to C-terminus: N-acetylneuraminate epimerase (386 aa).

The first 29 residues, 1–29 (MGMQMKNFKKMMTLMALCLSVAITTSGYA), serve as a signal peptide directing secretion. 7 Kelch repeats span residues 51–95 (VIYV…VFLN), 97–149 (ELYV…VKLN), 151–186 (TMVLITGGVNEHIFDKYFIDIAAAAADESEKNKVIY), 187–232 (NYFN…VMEN), 235–284 (LMLI…LAGA), 306–355 (QNYT…SYGD), and 357–386 (VFLIGGENAKGKPVSSVTSFTMRDGNLLIK). Glutamate 241 serves as the catalytic Proton acceptor.

Belongs to the NanM family. As to quaternary structure, homodimer.

Its subcellular location is the periplasm. It carries out the reaction N-acetyl-alpha-neuraminate = N-acetyl-beta-neuraminate. Functionally, converts alpha-N-acetylneuranimic acid (Neu5Ac) to the beta-anomer, accelerating the equilibrium between the alpha- and beta-anomers. Probably facilitates sialidase-negative bacteria to compete successfully for limited amounts of extracellular Neu5Ac, which is likely taken up in the beta-anomer. In addition, the rapid removal of sialic acid from solution might be advantageous to the bacterium to damp down host responses. The chain is N-acetylneuraminate epimerase from Salmonella choleraesuis (strain SC-B67).